The sequence spans 270 residues: MPEIIIVKNEAEAGEIYGRCVADLIKAKPDAVLGLATGSSPLAAYQALAKIVKDEAIDVSGVRGFALDEYIGLPLTHPESYHATIHRTVVEPLGLDPAKVHVPGDVLNGTPLEDGDKVALAGPAYDRAIEAAGGIDVQILGIGTDGHVGFNEPGSSLASGTRVKTLAEQTRIDNARFFDNDINQVPTHCITQGIGTIMKARHLVLLAFGAGKAEAIEETVEGGVSAFCPASALQMHPHATIIVDEEAASRLRHKDYYRYAYTHKPAWQGI.

The active-site Proton acceptor; for enolization step is the Asp68. Asp145 serves as the catalytic For ring-opening step. His147 functions as the Proton acceptor; for ring-opening step in the catalytic mechanism. Residue Glu152 is the For ring-opening step of the active site.

This sequence belongs to the glucosamine/galactosamine-6-phosphate isomerase family. NagB subfamily.

It carries out the reaction alpha-D-glucosamine 6-phosphate + H2O = beta-D-fructose 6-phosphate + NH4(+). Its pathway is amino-sugar metabolism; N-acetylneuraminate degradation; D-fructose 6-phosphate from N-acetylneuraminate: step 5/5. Catalyzes the reversible isomerization-deamination of glucosamine 6-phosphate (GlcN6P) to form fructose 6-phosphate (Fru6P) and ammonium ion. The protein is Glucosamine-6-phosphate deaminase of Bifidobacterium longum (strain NCC 2705).